The sequence spans 264 residues: Small ribosomal subunit protein eS1 (264 aa).

It belongs to the eukaryotic ribosomal protein eS1 family. Component of the small ribosomal subunit. Mature ribosomes consist of a small (40S) and a large (60S) subunit. The 40S subunit contains about 33 different proteins and 1 molecule of RNA (18S). The 60S subunit contains about 49 different proteins and 3 molecules of RNA (25S, 5.8S and 5S).

Its subcellular location is the cytoplasm. This chain is Small ribosomal subunit protein eS1, found in Babesia bovis.